A 100-amino-acid chain; its full sequence is Urease subunit gamma (100 aa).

It belongs to the urease gamma subunit family. In terms of assembly, heterotrimer of UreA (gamma), UreB (beta) and UreC (alpha) subunits. Three heterotrimers associate to form the active enzyme.

It localises to the cytoplasm. It carries out the reaction urea + 2 H2O + H(+) = hydrogencarbonate + 2 NH4(+). The protein operates within nitrogen metabolism; urea degradation; CO(2) and NH(3) from urea (urease route): step 1/1. In Burkholderia mallei (strain NCTC 10247), this protein is Urease subunit gamma.